Here is a 37-residue protein sequence, read N- to C-terminus: Cytochrome b6-f complex subunit 5 (37 aa).

A helical membrane pass occupies residues Leu-5 to Ala-25.

It belongs to the PetG family. As to quaternary structure, the 4 large subunits of the cytochrome b6-f complex are cytochrome b6, subunit IV (17 kDa polypeptide, PetD), cytochrome f and the Rieske protein, while the 4 small subunits are PetG, PetL, PetM and PetN. The complex functions as a dimer.

Its subcellular location is the cellular thylakoid membrane. Functionally, component of the cytochrome b6-f complex, which mediates electron transfer between photosystem II (PSII) and photosystem I (PSI), cyclic electron flow around PSI, and state transitions. PetG is required for either the stability or assembly of the cytochrome b6-f complex. The sequence is that of Cytochrome b6-f complex subunit 5 from Trichodesmium erythraeum (strain IMS101).